A 221-amino-acid chain; its full sequence is 2-amino-5-formylamino-6-ribosylaminopyrimidin-4(3H)-one 5'-monophosphate deformylase (221 aa).

Positions 29, 31, 40, and 108 each coordinate Fe cation.

This sequence belongs to the creatininase superfamily. FAPy deformylase family. In terms of assembly, homodimer. Fe(2+) serves as cofactor. Requires Zn(2+) as cofactor.

It carries out the reaction 2-amino-5-formylamino-6-(5-phospho-D-ribosylamino)pyrimidin-4(3H)-one + H2O = 2,5-diamino-6-(1-D-ribosylamino)pyrimidin-4(3H)-one 5'-phosphate + formate + H(+). The protein operates within cofactor biosynthesis; coenzyme F420 biosynthesis. It participates in cofactor biosynthesis; riboflavin biosynthesis. Functionally, catalyzes the hydrolysis of the formamide of 2-amino-5-formylamino-6-ribosylamino-4(3H)-pyrimidinone 5'-monophosphate (FAPy) to form 2,5-diamino-6-ribosylamino-4(3H)-pyrimidinone 5'-phosphate (APy). This is 2-amino-5-formylamino-6-ribosylaminopyrimidin-4(3H)-one 5'-monophosphate deformylase from Methanococcus maripaludis (strain C7 / ATCC BAA-1331).